Reading from the N-terminus, the 392-residue chain is Formate-dependent phosphoribosylglycinamide formyltransferase (392 aa).

N(1)-(5-phospho-beta-D-ribosyl)glycinamide contacts are provided by residues E22–L23 and E82. ATP contacts are provided by residues R114, K155, S160 to Q165, E195 to V198, and E203. The ATP-grasp domain maps to R119–L308. Mg(2+) contacts are provided by E267 and E279. N(1)-(5-phospho-beta-D-ribosyl)glycinamide is bound by residues D286, K355, and R362–R363.

The protein belongs to the PurK/PurT family. As to quaternary structure, homodimer.

The enzyme catalyses N(1)-(5-phospho-beta-D-ribosyl)glycinamide + formate + ATP = N(2)-formyl-N(1)-(5-phospho-beta-D-ribosyl)glycinamide + ADP + phosphate + H(+). It functions in the pathway purine metabolism; IMP biosynthesis via de novo pathway; N(2)-formyl-N(1)-(5-phospho-D-ribosyl)glycinamide from N(1)-(5-phospho-D-ribosyl)glycinamide (formate route): step 1/1. Its function is as follows. Involved in the de novo purine biosynthesis. Catalyzes the transfer of formate to 5-phospho-ribosyl-glycinamide (GAR), producing 5-phospho-ribosyl-N-formylglycinamide (FGAR). Formate is provided by PurU via hydrolysis of 10-formyl-tetrahydrofolate. The polypeptide is Formate-dependent phosphoribosylglycinamide formyltransferase (Salmonella dublin (strain CT_02021853)).